We begin with the raw amino-acid sequence, 1247 residues long: MEFIPAQTYYNRRYQPRPWTQRPTIQVIRPKPRRRRPAGQLAQLISAVSRLALRTVPQKPRRTRKIKKQKQVKQEQQSTTNQKKKAPKQKQTQKKKRPGRRERMCMKIENDCIFEVRHEGKVTGYACLVGDKVMKPAHVKGTIDNADLAKLAFKRSSKYDLECAQIPVHMKSDASKFTHEKPEGYYNWHHGAVQYSGGRFTIPTGAGKPGDSGRPIFDNKGRVVAIVLGGANEGTRTALSVVTWNKDIVTKITPEGSVEWSLALPVMCLLANTTFPCSQPPCAPCCYEKKPEETLRMLEDNVMQPGYYQLLDSALACSQRRQKRNARENFNVYKVTRPYLAHCPDCGEGHSCHSPIALERIRSEATDGTLKIQVSLQIGIKTDDSHDWTKLRYMDSHTPVDADRSGLFVRTSAPCTITGTMGHFILARCPKGETLTVGFVDSRRISHTCMHPFRHEPPLIGREKFHSRPQHGKELPCSTYVHTTAATAEEIEVHMPPDTPDYTLMTQQAGNVKITVDGQTVRYKCKCDGSNEGLITADKVINNCKVDQCHTAVTNHKKWQYNSPLTPRNSEQGDRKGKIHIPFPLVNTTCRVPKARNPTVTYGKNRVTLLLHPDHPTLLSYRAMGRIPDYHEEWITNKKEISITVPAEGLEVTWGNNDPYKYWPQLSTNGTAHGHPHEIILYYYELYPTTTIAVLAAASIVITSLVGLSLGMCICARRRCITPYELTPGATIPFLLGVLCCARTAKAASYYEAATYLWNEQQPLFWLQLLIPLSAAIVVCNCLKLLPCCCKTLTFLAVMSIGARTVTAYEHATVIPNTVGVPCKTLVSRPGYSPMVLEMELQSVTLEPALSLDYITCEYKTITPSPYVKCCGTAECKAKNLPDYNCKVFTGVYPFMWGGAYCFCDAENTQLSEAHVEKSESCKTEFASAYRAHTASVSAKLRVFYQGNNITVSAYANGDHAVTVEDAKFVIGPLSSAWSPFDNKIVVYKGEVYNMDYPPFGAGRPGQFGDIQSRTPDSKDVYANTQLILQRPAAGAIHVPYSQAPSGFKYWLKEKGASLQHTAPFGCQIATNPVRAVNCAVGNIPVSIDIPDAAFTRVTDAPSITDMSCEVASCTHSSDFGGAAVIKYTASKKGKCAVHSVTNAVTIREPNVDVKGTAQLQIAFSTALASAEFKVQICSTLVHCSATCHPPKDHIVNYPSPHTTLGVQDISTTAMSWVQKITGGVGLVVAIAALILIIVLCVSFSRH.

The segment at 36–67 (RPAGQLAQLISAVSRLALRTVPQKPRRTRKIK) is host transcription inhibition. The disordered stretch occupies residues 54–103 (RTVPQKPRRTRKIKKQKQVKQEQQSTTNQKKKAPKQKQTQKKKRPGRRER). Composition is skewed to basic residues over residues 59 to 71 (KPRR…KQKQ) and 82 to 100 (QKKK…RPGR). Residues 60-98 (PRRTRKIKKQKQVKQEQQSTTNQKKKAPKQKQTQKKKRP) carry the Nuclear localization signal motif. Residues 83–113 (KKKAPKQKQTQKKKRPGRRERMCMKIENDCI) form a binding to the viral RNA region. The interval 98–112 (PGRRERMCMKIENDC) is ribosome-binding. An intrachain disulfide couples cysteine 112 to cysteine 127. A Peptidase S3 domain is found at 112 to 260 (CIFEVRHEGK…KITPEGSVEW (149 aa)). Histidine 138 (charge relay system) is an active-site residue. The Nuclear export signal signature appears at 143 to 153 (IDNADLAKLAF). The tract at residues 154–159 (KRSSKY) is interaction with spike glycoprotein E2. Aspartate 160 (charge relay system) is an active-site residue. The segment at 182-192 (PEGYYNWHHGA) is dimerization of the capsid protein. Residue serine 212 is the Charge relay system of the active site. The tract at residues 218–222 (DNKGR) is dimerization of the capsid protein. The segment at 261–273 (SLALPVMCLLANT) is functions as an uncleaved signal peptide for the precursor of protein E3/E2. Disulfide bonds link cysteine 268–cysteine 277, cysteine 282–cysteine 286, cysteine 285–cysteine 317, cysteine 343–cysteine 449, cysteine 346–cysteine 352, cysteine 415–cysteine 429, cysteine 477–cysteine 590, cysteine 525–cysteine 549, and cysteine 527–cysteine 544. Asparagine 272 carries an N-linked (GlcNAc...) asparagine; by host glycan. Residues asparagine 587 and asparagine 669 are each glycosylated (N-linked (GlcNAc...) asparagine; by host). Residues 692–712 (IAVLAAASIVITSLVGLSLGM) traverse the membrane as a helical segment. The interaction with the capsid protein stretch occupies residues 715–719 (CARRR). Residues cysteine 720, cysteine 740, and cysteine 741 are each lipidated (S-palmitoyl cysteine; by host). The chain crosses the membrane as a helical span at residues 720-740 (CITPYELTPGATIPFLLGVLC). Residues 720-740 (CITPYELTPGATIPFLLGVLC) form a transient transmembrane before p62-6K protein processing region. The cysteines at positions 720 and 741 are disulfide-linked. The chain crosses the membrane as a helical span at residues 763–783 (PLFWLQLLIPLSAAIVVCNCL). Disulfide bonds link cysteine 857-cysteine 922, cysteine 870-cysteine 902, cysteine 871-cysteine 904, and cysteine 876-cysteine 886. An E1 fusion peptide loop region spans residues 892-909 (VYPFMWGGAYCFCDAENT). N-linked (GlcNAc...) asparagine; by host glycosylation is found at asparagine 949 and asparagine 1078. Intrachain disulfides connect cysteine 1067–cysteine 1079, cysteine 1109–cysteine 1184, cysteine 1114–cysteine 1188, and cysteine 1136–cysteine 1178. The helical transmembrane segment at 1224–1244 (GVGLVVAIAALILIIVLCVSF) threads the bilayer. A lipid anchor (S-palmitoyl cysteine; by host) is attached at cysteine 1241. Cysteine 1241 is lipidated: S-stearoyl cysteine; by host.

In terms of assembly, homodimer. Homomultimer. Interacts with host karyopherin KPNA4; this interaction allows the nuclear import of the viral capsid protein. Interacts with spike glycoprotein E2. Interacts with host IRAK1; the interaction leads to inhibition of IRAK1-dependent signaling. The precursor of protein E3/E2 and E1 form a heterodimer shortly after synthesis. As to quaternary structure, the precursor of protein E3/E2 and E1 form a heterodimer shortly after synthesis. Processing of the precursor of protein E3/E2 into E2 and E3 results in a heterodimer of the spike glycoproteins E2 and E1. Spike at virion surface are constituted of three E2-E1 heterodimers. After target cell attachment and endocytosis, E1 change conformation to form homotrimers. Interacts with 6K protein. In terms of assembly, interacts with spike glycoprotein E1. Processing of the precursor of protein E3/E2 into E2 and E3 results in a heterodimer of the spike glycoproteins E2 and E1. Spike at virion surface are constituted of a trimer of E2-E1 heterodimers. Interacts with 6K protein. Interacts with host MXRA8; this interaction mediates virus entry. Oligomer. Interacts with spike glycoprotein E1. Interacts with spike glycoprotein E2. In terms of processing, structural polyprotein: Specific enzymatic cleavages in vivo yield mature proteins. Capsid protein is auto-cleaved during polyprotein translation, unmasking a signal peptide at the N-terminus of the precursor of E3/E2. The remaining polyprotein is then targeted to the host endoplasmic reticulum, where host signal peptidase cleaves it into pE2, 6K and E1 proteins. pE2 is further processed to mature E3 and E2 by host furin in trans-Golgi vesicle. Post-translationally, palmitoylated via thioester bonds. These palmitoylations may induce disruption of the C-terminus transmembrane. This would result in the reorientation of E2 C-terminus from lumenal to cytoplasmic side. N-glycosylated. In terms of processing, palmitoylated via thioester bonds.

It localises to the virion. Its subcellular location is the host cytoplasm. The protein localises to the host cell membrane. It is found in the host nucleus. The protein resides in the virion membrane. It localises to the host Golgi apparatus. Its subcellular location is the host trans-Golgi network. The protein localises to the host endoplasmic reticulum. The enzyme catalyses Autocatalytic release of the core protein from the N-terminus of the togavirus structural polyprotein by hydrolysis of a -Trp-|-Ser- bond.. In terms of biological role, forms an icosahedral capsid with a T=4 symmetry composed of 240 copies of the capsid protein surrounded by a lipid membrane through which penetrate 80 spikes composed of trimers of E1-E2 heterodimers. The capsid protein binds to the viral RNA genome at a site adjacent to a ribosome binding site for viral genome translation following genome release. Possesses a protease activity that results in its autocatalytic cleavage from the nascent structural protein. Following its self-cleavage, the capsid protein transiently associates with ribosomes, and within several minutes the protein binds to viral RNA and rapidly assembles into icosahedric core particles. The resulting nucleocapsid eventually associates with the cytoplasmic domain of the spike glycoprotein E2 at the cell membrane, leading to budding and formation of mature virions. In case of infection, new virions attach to target cells and after clathrin-mediated endocytosis their membrane fuses with the host endosomal membrane. This leads to the release of the nucleocapsid into the cytoplasm, followed by an uncoating event necessary for the genomic RNA to become accessible. The uncoating might be triggered by the interaction of capsid proteins with ribosomes. Binding of ribosomes would release the genomic RNA since the same region is genomic RNA-binding and ribosome-binding. Specifically inhibits interleukin-1 receptor-associated kinase 1/IRAK1-dependent signaling during viral entry, representing a means by which the alphaviruses may evade innate immune detection and activation prior to viral gene expression. Functionally, provides the signal sequence for the translocation of the precursor of protein E3/E2 to the host endoplasmic reticulum. Furin-cleaved E3 remains associated with spike glycoprotein E1 and mediates pH protection of the latter during the transport via the secretory pathway. After virion release from the host cell, the assembly protein E3 is gradually released in the extracellular space. Plays a role in viral attachment to target host cell, by binding to the cell receptor MXRA8. Synthesized as a p62 precursor which is processed by furin at the cell membrane just before virion budding, giving rise to E2-E1 heterodimer. The p62-E1 heterodimer is stable, whereas E2-E1 is unstable and dissociate at low pH. p62 is processed at the last step, presumably to avoid E1 fusion activation before its final export to cell surface. E2 C-terminus contains a transitory transmembrane that would be disrupted by palmitoylation, resulting in reorientation of the C-terminal tail from lumenal to cytoplasmic side. This step is critical since E2 C-terminus is involved in budding by interacting with capsid proteins. This release of E2 C-terminus in cytoplasm occurs lately in protein export, and precludes premature assembly of particles at the endoplasmic reticulum membrane. Its function is as follows. Acts as a viroporin that participates in virus glycoprotein processing and transport to the plasma membrane, cell permeabilization and budding of viral particles. Disrupts the calcium homeostasis of the cell, probably at the endoplasmic reticulum level. This leads to cytoplasmic calcium elevation. Because of its lipophilic properties, the 6K protein is postulated to influence the selection of lipids that interact with the transmembrane domains of the glycoproteins, which, in turn, affects the deformability of the bilayer required for the extreme curvature that occurs as budding proceeds. Present in low amount in virions, about 3% compared to viral glycoproteins. In terms of biological role, class II viral fusion protein. Fusion activity is inactive as long as E1 is bound to E2 in mature virion. After virus attachment to target cell via host MXRA8 and endocytosis, acidification of the endosome induce dissociation of E1/E2 heterodimer and concomitant trimerization of the E1 subunits. This E1 trimer is fusion active, and promotes release of viral nucleocapsid in cytoplasm after endosome and viral membrane fusion. Efficient fusion requires the presence of cholesterol and sphingolipid in the target membrane. The protein is Structural polyprotein of O'nyong-nyong virus (strain Gulu) (ONNV).